A 181-amino-acid chain; its full sequence is Oligoribonuclease (181 aa).

The 164-residue stretch at leucine 8–leucine 171 folds into the Exonuclease domain. The active site involves tyrosine 129.

It belongs to the oligoribonuclease family.

The protein resides in the cytoplasm. In terms of biological role, 3'-to-5' exoribonuclease specific for small oligoribonucleotides. In Photorhabdus laumondii subsp. laumondii (strain DSM 15139 / CIP 105565 / TT01) (Photorhabdus luminescens subsp. laumondii), this protein is Oligoribonuclease.